The following is a 312-amino-acid chain: Pantothenate kinase (312 aa).

97 to 104 (GSVAVGKS) lines the ATP pocket.

Belongs to the prokaryotic pantothenate kinase family.

It localises to the cytoplasm. It carries out the reaction (R)-pantothenate + ATP = (R)-4'-phosphopantothenate + ADP + H(+). The protein operates within cofactor biosynthesis; coenzyme A biosynthesis; CoA from (R)-pantothenate: step 1/5. In Mycobacterium leprae (strain TN), this protein is Pantothenate kinase (coaA).